Here is a 329-residue protein sequence, read N- to C-terminus: Sulfate-binding protein (329 aa).

Residues methionine 1–alanine 19 form the signal peptide.

It belongs to the prokaryotic sulfate-binding protein family.

It is found in the periplasm. Its function is as follows. This protein specifically binds sulfate and is involved in its transmembrane transport. This Escherichia coli (strain K12) protein is Sulfate-binding protein (sbp).